We begin with the raw amino-acid sequence, 270 residues long: Aliphatic sulfonates import ATP-binding protein SsuB 3 (270 aa).

The ABC transporter domain occupies 17-238 (LAVQNLKKAF…ARGSHRLAAL (222 aa)). Residue 49 to 56 (GRSGCGKS) coordinates ATP.

Belongs to the ABC transporter superfamily. Aliphatic sulfonates importer (TC 3.A.1.17.2) family. The complex is composed of two ATP-binding proteins (SsuB), two transmembrane proteins (SsuC) and a solute-binding protein (SsuA).

It is found in the cell inner membrane. It carries out the reaction ATP + H2O + aliphatic sulfonate-[sulfonate-binding protein]Side 1 = ADP + phosphate + aliphatic sulfonateSide 2 + [sulfonate-binding protein]Side 1.. Part of the ABC transporter complex SsuABC involved in aliphatic sulfonates import. Responsible for energy coupling to the transport system. The polypeptide is Aliphatic sulfonates import ATP-binding protein SsuB 3 (Pseudomonas syringae pv. tomato (strain ATCC BAA-871 / DC3000)).